A 518-amino-acid polypeptide reads, in one-letter code: Chromosomal replication initiator protein DnaA (518 aa).

The interval 1–72 (MTLAEFWPLC…VREELAAGRS (72 aa)) is domain I, interacts with DnaA modulators. Residues 72–180 (SAFVFKPGEG…DAEEARYEQT (109 aa)) form a domain II region. Residues 181–397 (NLSPDYTFDT…GAFNRVGASS (217 aa)) are domain III, AAA+ region. The ATP site is built by glycine 225, glycine 227, lysine 228, and threonine 229. Residues 398-518 (RFMNRPVIDI…YEKLLILIQN (121 aa)) are domain IV, binds dsDNA.

Belongs to the DnaA family. As to quaternary structure, oligomerizes as a right-handed, spiral filament on DNA at oriC.

It localises to the cytoplasm. Plays an essential role in the initiation and regulation of chromosomal replication. ATP-DnaA binds to the origin of replication (oriC) to initiate formation of the DNA replication initiation complex once per cell cycle. Binds the DnaA box (a 9 base pair repeat at the origin) and separates the double-stranded (ds)DNA. Forms a right-handed helical filament on oriC DNA; dsDNA binds to the exterior of the filament while single-stranded (ss)DNA is stabiized in the filament's interior. The ATP-DnaA-oriC complex binds and stabilizes one strand of the AT-rich DNA unwinding element (DUE), permitting loading of DNA polymerase. After initiation quickly degrades to an ADP-DnaA complex that is not apt for DNA replication. Binds acidic phospholipids. This is Chromosomal replication initiator protein DnaA from Neisseria meningitidis serogroup C / serotype 2a (strain ATCC 700532 / DSM 15464 / FAM18).